Reading from the N-terminus, the 508-residue chain is Photosystem II CP47 reaction center protein (508 aa).

6 helical membrane-spanning segments follow: residues S21–S36, I101–W115, G140–F156, I203–S218, V237–V252, and S457–R472.

This sequence belongs to the PsbB/PsbC family. PsbB subfamily. In terms of assembly, PSII is composed of 1 copy each of membrane proteins PsbA, PsbB, PsbC, PsbD, PsbE, PsbF, PsbH, PsbI, PsbJ, PsbK, PsbL, PsbM, PsbT, PsbX, PsbY, PsbZ, Psb30/Ycf12, at least 3 peripheral proteins of the oxygen-evolving complex and a large number of cofactors. It forms dimeric complexes. It depends on Binds multiple chlorophylls. PSII binds additional chlorophylls, carotenoids and specific lipids. as a cofactor.

Its subcellular location is the plastid. The protein resides in the chloroplast thylakoid membrane. In terms of biological role, one of the components of the core complex of photosystem II (PSII). It binds chlorophyll and helps catalyze the primary light-induced photochemical processes of PSII. PSII is a light-driven water:plastoquinone oxidoreductase, using light energy to abstract electrons from H(2)O, generating O(2) and a proton gradient subsequently used for ATP formation. This Olimarabidopsis pumila (Dwarf rocket) protein is Photosystem II CP47 reaction center protein.